We begin with the raw amino-acid sequence, 757 residues long: MDYLESLDFPKVVEIVKKYALSDLGRKHLDTLKPTVNPWDELELVEELLNYFARWGEPPIKGLNDISQEVERVKSGSALEPWELLRVSVFLEGCDILKKDFEKREYSRLKETFSRLSSFRDFVEEVNRCIEQDGEISDRASPRLREIRTEKKRLASEIKRKADDFVRTHSQILQEQMYVYRDGRYLFPVKASMRNAVRGIVHHLSSSGATVFLEPDEFVELNNRVRLLEEEERLEISRILRQLTNILLSRLNDLERNVELIARFDSLYARVKFAREFNGTVVKPSSRIRLVNARHPLIPKERVVPINLELPPNKRGFIITGPNMGGKTVTVKTVGLFTALMMSGFPLPCDEGTELKVFPKIMADIGEEQSIEQSLSTFSSHMKKIVEIVKNADSDSLVILDELGSGTDPVEGAALAVAIIEDLLEKGATIFVTTHLTPVKVFAMNHPLLLNASMEFDPETLSPTYRVLVGVPGGSHAFQIAEKLGLDKRIIENARSRLSREEMELEGLIRSLHEKISLLEEEKRKLQKEREEYMKLREKYEEDYKKLRRMKIEEFDKELRELNDYIRKVKKELDQAIHVAKTGSVDEMREAVKTIEKEKKDLEQKRIEEATEEEIKPGDHVKMEGGTSVGKVVEVKSGTALVDFGFLRLKVPVSKLKKAKKEEKEESSAVSYRPSSFRTEIDIRGMTVEEAEPVVKKFIDDLMMNGISKGYIIHGKGTGKLASGVWEILRKDKRVVSFRFGTPSEGGTGVTVVEVKV.

321-328 contacts ATP; the sequence is GPNMGGKT. The 76-residue stretch at 681–756 folds into the Smr domain; sequence IDIRGMTVEE…GTGVTVVEVK (76 aa).

Belongs to the DNA mismatch repair MutS family. MutS2 subfamily. As to quaternary structure, homodimer. Binds to stalled ribosomes, contacting rRNA.

In terms of biological role, endonuclease that is involved in the suppression of homologous recombination and thus may have a key role in the control of bacterial genetic diversity. Acts as a ribosome collision sensor, splitting the ribosome into its 2 subunits. Detects stalled/collided 70S ribosomes which it binds and splits by an ATP-hydrolysis driven conformational change. Acts upstream of the ribosome quality control system (RQC), a ribosome-associated complex that mediates the extraction of incompletely synthesized nascent chains from stalled ribosomes and their subsequent degradation. Probably generates substrates for RQC. This chain is Endonuclease MutS2, found in Thermotoga sp. (strain RQ2).